Reading from the N-terminus, the 358-residue chain is tRNA-specific 2-thiouridylase MnmA (358 aa).

ATP-binding positions include 6 to 13 (ALSGGVDS) and Met32. Residue Cys103 is the Nucleophile of the active site. Cysteines 103 and 201 form a disulfide. An ATP-binding site is contributed by Gly127. The segment at 151–153 (KDQ) is interaction with tRNA. Cys201 serves as the catalytic Cysteine persulfide intermediate.

It belongs to the MnmA/TRMU family.

It localises to the cytoplasm. The catalysed reaction is S-sulfanyl-L-cysteinyl-[protein] + uridine(34) in tRNA + AH2 + ATP = 2-thiouridine(34) in tRNA + L-cysteinyl-[protein] + A + AMP + diphosphate + H(+). Functionally, catalyzes the 2-thiolation of uridine at the wobble position (U34) of tRNA, leading to the formation of s(2)U34. This Thermotoga maritima (strain ATCC 43589 / DSM 3109 / JCM 10099 / NBRC 100826 / MSB8) protein is tRNA-specific 2-thiouridylase MnmA.